The sequence spans 266 residues: Enterotoxin type C-3 (266 aa).

Residues 1-27 (MYKRLFISRVILIFALILVISTPNVLA) form the signal peptide. Zn(2+) contacts are provided by D36 and D110. The cysteines at positions 120 and 137 are disulfide-linked. Zn(2+) is bound by residues H145 and H149.

The protein belongs to the staphylococcal/streptococcal toxin family. As to quaternary structure, interacts with MHC class II molecules composed of alpha/HLA-DRA and beta/HLA-DRB1 chains. Interacts with host T-cell receptor/TCR beta variable chain TRBV8-2.

The protein localises to the secreted. Its function is as follows. Staphylococcal enterotoxin that activates the host immune system by binding as unprocessed molecules to major histocompatibility (MHC) complex class II and T-cell receptor (TCR) molecules. In turn, this ternary complex activates a large number of T-lymphocytes initiating a systemic release of pro-inflammatory cytokines. Also causes the intoxication staphylococcal food poisoning syndrome. This is Enterotoxin type C-3 (entC3) from Staphylococcus aureus.